We begin with the raw amino-acid sequence, 270 residues long: uncharacterized protein (270 aa).

Positions 22-31 are enriched in basic and acidic residues; that stretch reads EAPQRTEASR. Positions 22–42 are disordered; it reads EAPQRTEASRTHPSPFLALPG.

This is an uncharacterized protein from Homo sapiens (Human).